Consider the following 136-residue polypeptide: Small cardioactive peptides (136 aa).

Residues 1-24 (METSVSRVTVSLTLLVLIICSADA) form the signal peptide. Residues Met-33 and Met-46 each carry the methionine amide modification. Positions 49-135 (SQMKTETGTD…VLSKLKSLLQ (87 aa)) are cleaved as a propeptide — carboxy-terminal peptide.

This sequence belongs to the SCP family. Post-translationally, contains three disulfide bonds. In terms of tissue distribution, highly expressed in the buccal ganglion.

The protein resides in the secreted. Its function is as follows. Involved in the stimulation of contractile activity in the gut, the increase of the amplitude of the heart beat, and enhancement of the contractile response of the radula closer muscle. This Aplysia californica (California sea hare) protein is Small cardioactive peptides.